The chain runs to 235 residues: Homeobox protein Nkx-2.8 (235 aa).

Residues 51-67 are compositionally biased toward polar residues; the sequence is SDESGLETSPADSSQLA. Residues 51-86 are disordered; sequence SDESGLETSPADSSQLASLRRESPGSDPEKRRKRRV. The span at 69–80 shows a compositional bias: basic and acidic residues; the sequence is LRRESPGSDPEK. A DNA-binding region (homeobox) is located at residues 81-140; the sequence is RRKRRVLFSKAQTLELERRFRQQRYLSAPEREQLARLLRLTPTQVKIWFQNHRYKLKRGR.

The protein belongs to the NK-2 homeobox family. Prominent expression in ventral brain and neural tube structures.

It localises to the nucleus. In terms of biological role, possible role in the specification of a distinct subset of neurons. The sequence is that of Homeobox protein Nkx-2.8 (Nkx2-8) from Mus musculus (Mouse).